The primary structure comprises 778 residues: Dynein axonemal intermediate chain 4 (778 aa).

WD repeat units lie at residues 477–517 (HCES…QTPI), 526–573 (LHTS…ECVD), 586–629 (RHIS…QYLE), 633–673 (AHKR…PVMG), 676–715 (SGQRVVFDIMWSPHCATVFGAVSEGKVEIWDLRVSSLDPT), and 721–760 (SPGVNPTALLFSPETDCVLVGDSEGQVTVYKLKNITAGGG).

Part of the multisubunit axonemal dynein complex formed at least of two heavy chains and a number of intermediate and light chains.

Its subcellular location is the cytoplasm. The protein resides in the cytoskeleton. The protein localises to the flagellum axoneme. It localises to the cilium axoneme. It is found in the dynein axonemal particle. In terms of biological role, plays a critical role in the assembly of axonemal dynein complex. Plays a key role in ciliary motility. In Danio rerio (Zebrafish), this protein is Dynein axonemal intermediate chain 4.